A 277-amino-acid polypeptide reads, in one-letter code: Formamidopyrimidine-DNA glycosylase (277 aa).

Pro-2 (schiff-base intermediate with DNA) is an active-site residue. Glu-3 acts as the Proton donor in catalysis. Catalysis depends on Lys-60, which acts as the Proton donor; for beta-elimination activity. The DNA site is built by His-94, Arg-113, and Arg-156. Residues 241-275 (KVYNREGLPCPHCGKPIQRIKVAGRSSYYCSSCQK) form an FPG-type zinc finger. The active-site Proton donor; for delta-elimination activity is the Arg-265.

It belongs to the FPG family. In terms of assembly, monomer. Zn(2+) serves as cofactor.

It carries out the reaction Hydrolysis of DNA containing ring-opened 7-methylguanine residues, releasing 2,6-diamino-4-hydroxy-5-(N-methyl)formamidopyrimidine.. It catalyses the reaction 2'-deoxyribonucleotide-(2'-deoxyribose 5'-phosphate)-2'-deoxyribonucleotide-DNA = a 3'-end 2'-deoxyribonucleotide-(2,3-dehydro-2,3-deoxyribose 5'-phosphate)-DNA + a 5'-end 5'-phospho-2'-deoxyribonucleoside-DNA + H(+). Its function is as follows. Involved in base excision repair of DNA damaged by oxidation or by mutagenic agents. Acts as a DNA glycosylase that recognizes and removes damaged bases. Has a preference for oxidized purines, such as 7,8-dihydro-8-oxoguanine (8-oxoG). Has AP (apurinic/apyrimidinic) lyase activity and introduces nicks in the DNA strand. Cleaves the DNA backbone by beta-delta elimination to generate a single-strand break at the site of the removed base with both 3'- and 5'-phosphates. This Desulforamulus reducens (strain ATCC BAA-1160 / DSM 100696 / MI-1) (Desulfotomaculum reducens) protein is Formamidopyrimidine-DNA glycosylase.